The following is a 382-amino-acid chain: MAKADYYETLGVSRTADEKELKSAFRKLAMQFHPDKNPDDNDAERKFKEINEAYETLKDPNKRAAYDRYGHAAFEHGGMGGGGFGGGGFGGGGGFSDIFEDIFGEMMGGGRGRARSSGGRERGADLRYNMEISLEEAFTGKTAQIRVPTSITCDVCSGSGAKPGTQPKTCGTCQGSGRVRAAQGFFSVERTCPTCHGRGQTIPDPCGKCHGQGRITEERSLSVNIPSGIEDGTRIRLQGEGEAGTRGGPSGDLYIFLSVKPHEFFQRDGADLYCAVPISMTTAALGGTFDVATLDGTKSRVTVPEGTQVGKQFRLKAKGMPVLRSSQVGDLYIQIQIETPQKLTKRQRELLQEFEQISSKDNNPESTGFFARMKDFFDTFSD.

Residues 5 to 70 (DYYETLGVSR…NKRAAYDRYG (66 aa)) form the J domain. A CR-type zinc finger spans residues 140-218 (GKTAQIRVPT…CHGQGRITEE (79 aa)). Residues Cys153, Cys156, Cys170, Cys173, Cys192, Cys195, Cys206, and Cys209 each coordinate Zn(2+). 4 CXXCXGXG motif repeats span residues 153–160 (CDVCSGSG), 170–177 (CGTCQGSG), 192–199 (CPTCHGRG), and 206–213 (CGKCHGQG).

Belongs to the DnaJ family. Homodimer. It depends on Zn(2+) as a cofactor.

It localises to the cytoplasm. Participates actively in the response to hyperosmotic and heat shock by preventing the aggregation of stress-denatured proteins and by disaggregating proteins, also in an autonomous, DnaK-independent fashion. Unfolded proteins bind initially to DnaJ; upon interaction with the DnaJ-bound protein, DnaK hydrolyzes its bound ATP, resulting in the formation of a stable complex. GrpE releases ADP from DnaK; ATP binding to DnaK triggers the release of the substrate protein, thus completing the reaction cycle. Several rounds of ATP-dependent interactions between DnaJ, DnaK and GrpE are required for fully efficient folding. Also involved, together with DnaK and GrpE, in the DNA replication of plasmids through activation of initiation proteins. The polypeptide is Chaperone protein DnaJ (Rhizobium rhizogenes (strain K84 / ATCC BAA-868) (Agrobacterium radiobacter)).